A 197-amino-acid polypeptide reads, in one-letter code: Recombination protein RecR (197 aa).

The C4-type zinc finger occupies 56 to 71 (CQQCRTLTEQALCNIC). A Toprim domain is found at 79-174 (KELCIVETPA…KVSRIAHGIP (96 aa)).

The protein belongs to the RecR family.

Its function is as follows. May play a role in DNA repair. It seems to be involved in an RecBC-independent recombinational process of DNA repair. It may act with RecF and RecO. In Saccharophagus degradans (strain 2-40 / ATCC 43961 / DSM 17024), this protein is Recombination protein RecR.